Reading from the N-terminus, the 501-residue chain is MEGDSNPLYEQRFNAAVKVIQNLPPNGSFQPSHDMMLKFYSYYKQATQGPCNIPRPGFWDPVGKAKWDAWSSLGEMPKEEAMAAYVDDLKLILESMPVSSEVEELLQVIGPFYELVDEKRKITQVSDLSTGFGNLLSSPPKCVTKSIIRTMEMNGNLEGYPIKTAETLKVKSIDLEDREDDDDEDEEGERDEVEEFKEVEKASQPKKRVSAGRPKGPVSNGSISQHKGLSNGTHGSKSDLNRQESEENTEHMNHDGGIVELNGHLNSEKDKEEDVSSSHHVASDSDSEVYCDSVDQFGGEDGSEIHMNRSLEVLEESHSTPSSTGDIRSQDDELLGREEGVQHGGEDGRGSRGGAQRRELPVKRSDSSVVRRGRGSRSPASGSGSAGPQQGSGGDGERWGADGPMTENLNEQIICALARLQDDMQSVLQRLHTLEALTASQARSLALPSDYLTTPANRNKKKPSWWPFDVSLGTVAFAVVWPFVVQWLIRVYVQRRRRRIN.

In terms of domain architecture, ACB spans Y9 to V98. An acyl-CoA is bound by residues I20–F29, Y40–K44, K66, and Y85. The interval I173–M405 is disordered. The span at E176 to E195 shows a compositional bias: acidic residues. Over residues S219–G235 the composition is skewed to polar residues. 3 stretches are compositionally biased toward basic and acidic residues: residues S236–H254, N266–S283, and R328–D366. The segment covering S376–Q389 has biased composition (low complexity). Residues T406–L437 are a coiled coil. The chain crosses the membrane as a helical span at residues W465–V485.

Belongs to the ATG37 family.

The protein resides in the membrane. Acyl-CoA binding protein which acts as the peroxisome receptor for pexophagy but is dispensable for aggrephagy and nonselective autophagy. Binds medium- and long-chain acyl-CoA esters. In Danio rerio (Zebrafish), this protein is Acyl-CoA-binding domain-containing protein 5A (acbd5a).